A 63-amino-acid chain; its full sequence is Large ribosomal subunit protein uL29 (63 aa).

Belongs to the universal ribosomal protein uL29 family.

In Pectobacterium atrosepticum (strain SCRI 1043 / ATCC BAA-672) (Erwinia carotovora subsp. atroseptica), this protein is Large ribosomal subunit protein uL29.